Consider the following 339-residue polypeptide: DNA-directed RNA polymerase subunit alpha (339 aa).

Residues 1–233 are alpha N-terminal domain (alpha-NTD); the sequence is MVREEVAGST…DLFLPFLHAE (233 aa). Residues 264–339 form an alpha C-terminal domain (alpha-CTD) region; the sequence is KKGIPLNCIF…IDLLKNKLSF (76 aa).

It belongs to the RNA polymerase alpha chain family. As to quaternary structure, in plastids the minimal PEP RNA polymerase catalytic core is composed of four subunits: alpha, beta, beta', and beta''. When a (nuclear-encoded) sigma factor is associated with the core the holoenzyme is formed, which can initiate transcription.

The protein resides in the plastid. It localises to the chloroplast. The catalysed reaction is RNA(n) + a ribonucleoside 5'-triphosphate = RNA(n+1) + diphosphate. Its function is as follows. DNA-dependent RNA polymerase catalyzes the transcription of DNA into RNA using the four ribonucleoside triphosphates as substrates. In Thinopyrum bessarabicum (Wheatgrass), this protein is DNA-directed RNA polymerase subunit alpha.